The sequence spans 266 residues: Hydroxyethylthiazole kinase (266 aa).

Met-46 is a substrate binding site. Residues Arg-122 and Ser-168 each coordinate ATP. Gly-195 lines the substrate pocket.

It belongs to the Thz kinase family. It depends on Mg(2+) as a cofactor.

The catalysed reaction is 5-(2-hydroxyethyl)-4-methylthiazole + ATP = 4-methyl-5-(2-phosphooxyethyl)-thiazole + ADP + H(+). The protein operates within cofactor biosynthesis; thiamine diphosphate biosynthesis; 4-methyl-5-(2-phosphoethyl)-thiazole from 5-(2-hydroxyethyl)-4-methylthiazole: step 1/1. Functionally, catalyzes the phosphorylation of the hydroxyl group of 4-methyl-5-beta-hydroxyethylthiazole (THZ). This Oleidesulfovibrio alaskensis (strain ATCC BAA-1058 / DSM 17464 / G20) (Desulfovibrio alaskensis) protein is Hydroxyethylthiazole kinase.